A 238-amino-acid polypeptide reads, in one-letter code: Large ribosomal subunit protein uL1 (238 aa).

The protein belongs to the universal ribosomal protein uL1 family. Part of the 50S ribosomal subunit.

Its function is as follows. Binds directly to 23S rRNA. The L1 stalk is quite mobile in the ribosome, and is involved in E site tRNA release. Functionally, protein L1 is also a translational repressor protein, it controls the translation of the L11 operon by binding to its mRNA. The polypeptide is Large ribosomal subunit protein uL1 (Salinispora arenicola (strain CNS-205)).